The sequence spans 673 residues: G-protein-signaling modulator 1 (673 aa).

Residues 1–507 (MASPAPPVAE…DLLSKFQSSR (507 aa)) are mediates association with membranes. TPR repeat units follow at residues 28–61 (CLEL…GTED), 66–99 (SAIY…ARTI), 106–139 (AKAS…AQEQ), 146–178 (ARAL…PPDV), 180–199 (ETLH…VKEL), 206–239 (GRAY…AKEF), 246–279 (RRAY…SRQL), 286–319 (AQAC…AQEL), and 326–359 (GRAC…SQEI). Residues 361 to 485 (DRNGELTARM…VRVQVPRTGI (125 aa)) are interaction with STK11/LKB1. Residue serine 410 is modified to Phosphoserine. At arginine 418 the chain carries Omega-N-methylarginine. The segment covering 420–439 (PLDREQNGETHHTGDWRGPG) has biased composition (basic and acidic residues). A disordered region spans residues 420-475 (PLDREQNGETHHTGDWRGPGRDSLPLPMRSRKYQEGPDAIERRPREGSHSPLDSAD). Phosphoserine is present on residues serine 442, serine 467, serine 469, serine 490, and serine 491. Positions 451 to 467 (KYQEGPDAIERRPREGS) are enriched in basic and acidic residues. In terms of domain architecture, GoLoco 1 spans 493 to 515 (EECFFDLLSKFQSSRMDDQRCPL). A disordered region spans residues 508 to 531 (MDDQRCPLEEGQAGAAEATAAPSV). The segment covering 516-528 (EEGQAGAAEATAA) has biased composition (low complexity). 2 positions are modified to phosphoserine: serine 543 and serine 567. GoLoco domains are found at residues 546 to 568 (TEEF…RASV), 594 to 616 (GDEF…RCPP), and 628 to 650 (DEDF…RVDL). Positions 644–673 (DEQRVDLAGSPEQEASGLPDPQQQCPPGAS) are disordered. Residue serine 653 is modified to Phosphoserine. The span at 664 to 673 (PQQQCPPGAS) shows a compositional bias: polar residues.

It belongs to the GPSM family. In terms of assembly, interacts with GNAI1 and GNAI2 preferentially in their GDP-bound state. May also interact with GNAO1. Interacts with INSC/inscuteable and FRMPD1. Interacts with GNAI3. Interacts with STK11/LKB1 and MACF1. Post-translationally, phosphorylation regulates interaction with G(i/o) alpha. In terms of tissue distribution, expressed in neural progenitor cells (at protein level).

The protein resides in the cytoplasm. Its subcellular location is the cytosol. It localises to the endoplasmic reticulum membrane. The protein localises to the golgi apparatus membrane. It is found in the cell membrane. Functionally, guanine nucleotide dissociation inhibitor (GDI) which functions as a receptor-independent activator of heterotrimeric G-protein signaling. Keeps G(i/o) alpha subunit in its GDP-bound form thus uncoupling heterotrimeric G-proteins signaling from G protein-coupled receptors. Controls spindle orientation and asymmetric cell fate of cerebral cortical progenitors. May also be involved in macroautophagy in intestinal cells. May play a role in drug addiction. The sequence is that of G-protein-signaling modulator 1 (Gpsm1) from Mus musculus (Mouse).